The chain runs to 423 residues: MDNHNSSHQLYKKAMALVLAGGRGSRLYNLTDTRAKPAVYFGGKFRIIDFALSNCLNSGIRRIGVVTQYKSHSLLRHLQRGWGFLRGELNEFIDLLPAQQRVDEEHWYRGTADAVYQNIDILRSYGPEYVIVLAGDHIYKMDYSIMLRDHAQSGYKCTVGCVEIAKEEAYAFGIMGIDENRKITSFIEKPKKNAPTIPGTTDRCYASMGIYIFNSDYLYDLLEEDITNKESSHDFGKDIIPRVVSENQALAHPFSMSCVPRGEGIQPYWRDVGTIDAFWEANLDLAANMPELNIYDKDWPVWTAQEQLPPAKFVPDRNGNHGVITNTLASGGCIVLGSEISKSLMFSKVRVLAGCKIDQCVIMPEVVVGENCRLKKVVIDKGCDIPAGMVIGEDPIEDAKNFYRTDKGVVLVTKKMIDELKEK.

Residues Tyr108, Gly173, 188–189, and Ser207 contribute to the alpha-D-glucose 1-phosphate site; that span reads EK.

This sequence belongs to the bacterial/plant glucose-1-phosphate adenylyltransferase family. As to quaternary structure, homotetramer.

The catalysed reaction is alpha-D-glucose 1-phosphate + ATP + H(+) = ADP-alpha-D-glucose + diphosphate. It participates in glycan biosynthesis; glycogen biosynthesis. Involved in the biosynthesis of ADP-glucose, a building block required for the elongation reactions to produce glycogen. Catalyzes the reaction between ATP and alpha-D-glucose 1-phosphate (G1P) to produce pyrophosphate and ADP-Glc. This is Glucose-1-phosphate adenylyltransferase from Francisella tularensis subsp. novicida (strain U112).